The following is a 317-amino-acid chain: UV DNA damage endonuclease (317 aa).

This sequence belongs to the uve1/UvsE family.

In terms of biological role, component in a DNA repair pathway. Removal of UV LIGHT damaged nucleotides. Recognizes pyrimidine dimers and cleave a phosphodiester bond immediately 5' to the lesion. The sequence is that of UV DNA damage endonuclease from Bacillus cereus (strain Q1).